Here is a 501-residue protein sequence, read N- to C-terminus: Armadillo repeat-containing protein 6 (501 aa).

Ser64 carries the phosphoserine modification. ARM repeat units lie at residues 220 to 264 (GVLP…HAHN), 274 to 318 (KGLK…DLGG), 319 to 369 (LSIL…RAGG), and 370 to 412 (TESI…VEGG). A Pros-methylhistidine modification is found at His263.

It belongs to the ARMC6 family. Post-translationally, methylated at His-263 by METTL9.

This Pongo abelii (Sumatran orangutan) protein is Armadillo repeat-containing protein 6 (ARMC6).